Reading from the N-terminus, the 264-residue chain is Thymidylate synthase (264 aa).

Residue R21 coordinates dUMP. Residue H51 participates in (6R)-5,10-methylene-5,6,7,8-tetrahydrofolate binding. A dUMP-binding site is contributed by 126 to 127; that stretch reads RR. C146 functions as the Nucleophile in the catalytic mechanism. DUMP-binding positions include 166–169, N177, and 207–209; these read RSAD and HLY. D169 lines the (6R)-5,10-methylene-5,6,7,8-tetrahydrofolate pocket. A (6R)-5,10-methylene-5,6,7,8-tetrahydrofolate-binding site is contributed by A263.

The protein belongs to the thymidylate synthase family. Bacterial-type ThyA subfamily. Homodimer.

It is found in the cytoplasm. It catalyses the reaction dUMP + (6R)-5,10-methylene-5,6,7,8-tetrahydrofolate = 7,8-dihydrofolate + dTMP. The protein operates within pyrimidine metabolism; dTTP biosynthesis. In terms of biological role, catalyzes the reductive methylation of 2'-deoxyuridine-5'-monophosphate (dUMP) to 2'-deoxythymidine-5'-monophosphate (dTMP) while utilizing 5,10-methylenetetrahydrofolate (mTHF) as the methyl donor and reductant in the reaction, yielding dihydrofolate (DHF) as a by-product. This enzymatic reaction provides an intracellular de novo source of dTMP, an essential precursor for DNA biosynthesis. The chain is Thymidylate synthase from Bartonella bacilliformis (strain ATCC 35685 / KC583 / Herrer 020/F12,63).